A 149-amino-acid chain; its full sequence is uncharacterized protein (149 aa).

Positions 1–149 (MNIRQAKTSD…VHYCLNVPAK (149 aa)) constitute an N-acetyltransferase domain.

It belongs to the acetyltransferase family.

This is an uncharacterized protein from Bacillus subtilis (strain 168).